The sequence spans 302 residues: 5'-3' exonuclease (302 aa).

The 5'-3' exonuclease domain maps to 173-269 (IPKLIPDLLG…NITTKKIKML (97 aa)).

Its function is as follows. 5'-3' exonuclease acting preferentially on double-stranded DNA. The polypeptide is 5'-3' exonuclease (pol) (Buchnera aphidicola subsp. Baizongia pistaciae (strain Bp)).